The sequence spans 342 residues: Ribosomal RNA small subunit methyltransferase H (342 aa).

Residues Gly36–His38, Asp56, Phe82, Asp100, and Gln107 each bind S-adenosyl-L-methionine. The interval Gly311–Ala342 is disordered.

It belongs to the methyltransferase superfamily. RsmH family.

Its subcellular location is the cytoplasm. The enzyme catalyses cytidine(1402) in 16S rRNA + S-adenosyl-L-methionine = N(4)-methylcytidine(1402) in 16S rRNA + S-adenosyl-L-homocysteine + H(+). Functionally, specifically methylates the N4 position of cytidine in position 1402 (C1402) of 16S rRNA. This is Ribosomal RNA small subunit methyltransferase H from Xanthomonas axonopodis pv. citri (strain 306).